The primary structure comprises 673 residues: UvrABC system protein B (673 aa).

The region spanning glutamate 26–arginine 183 is the Helicase ATP-binding domain. Glycine 39–threonine 46 lines the ATP pocket. The Beta-hairpin motif lies at tyrosine 92 to valine 115. A Helicase C-terminal domain is found at glutamine 431–leucine 597. Residues alanine 608–methionine 627 are disordered. The UVR domain maps to glutamine 633 to leucine 668.

The protein belongs to the UvrB family. In terms of assembly, forms a heterotetramer with UvrA during the search for lesions. Interacts with UvrC in an incision complex.

The protein localises to the cytoplasm. Its function is as follows. The UvrABC repair system catalyzes the recognition and processing of DNA lesions. A damage recognition complex composed of 2 UvrA and 2 UvrB subunits scans DNA for abnormalities. Upon binding of the UvrA(2)B(2) complex to a putative damaged site, the DNA wraps around one UvrB monomer. DNA wrap is dependent on ATP binding by UvrB and probably causes local melting of the DNA helix, facilitating insertion of UvrB beta-hairpin between the DNA strands. Then UvrB probes one DNA strand for the presence of a lesion. If a lesion is found the UvrA subunits dissociate and the UvrB-DNA preincision complex is formed. This complex is subsequently bound by UvrC and the second UvrB is released. If no lesion is found, the DNA wraps around the other UvrB subunit that will check the other stand for damage. This is UvrABC system protein B from Escherichia coli O81 (strain ED1a).